The primary structure comprises 399 residues: Imidazolonepropionase (399 aa).

The Fe(3+) site is built by H74 and H76. Positions 74 and 76 each coordinate Zn(2+). Residues R83, Y146, and H176 each contribute to the 4-imidazolone-5-propanoate site. N-formimidoyl-L-glutamate is bound at residue Y146. A Fe(3+)-binding site is contributed by H238. H238 contributes to the Zn(2+) binding site. Q241 lines the 4-imidazolone-5-propanoate pocket. D312 lines the Fe(3+) pocket. D312 lines the Zn(2+) pocket. N-formimidoyl-L-glutamate-binding residues include N314 and G316. 4-imidazolone-5-propanoate is bound at residue S317.

Belongs to the metallo-dependent hydrolases superfamily. HutI family. The cofactor is Zn(2+). It depends on Fe(3+) as a cofactor.

The protein resides in the cytoplasm. The catalysed reaction is 4-imidazolone-5-propanoate + H2O = N-formimidoyl-L-glutamate. It participates in amino-acid degradation; L-histidine degradation into L-glutamate; N-formimidoyl-L-glutamate from L-histidine: step 3/3. Its function is as follows. Catalyzes the hydrolytic cleavage of the carbon-nitrogen bond in imidazolone-5-propanoate to yield N-formimidoyl-L-glutamate. It is the third step in the universal histidine degradation pathway. The sequence is that of Imidazolonepropionase from Deinococcus deserti (strain DSM 17065 / CIP 109153 / LMG 22923 / VCD115).